A 152-amino-acid polypeptide reads, in one-letter code: Toxin coregulated pilus biosynthesis protein S (152 aa).

The N-terminal stretch at 1-20 (MNIKLSFISIAFLSLSFNVA) is a signal peptide.

The protein localises to the periplasm. It is found in the secreted. Its function is as follows. The toxin coregulated pilus (TCP) is essential for successful colonization of the small intestine. The polypeptide is Toxin coregulated pilus biosynthesis protein S (tcpS) (Vibrio cholerae serotype O1 (strain ATCC 39315 / El Tor Inaba N16961)).